Reading from the N-terminus, the 440-residue chain is Golgi-associated RAB2 interactor protein 2 (440 aa).

Belongs to the GARIN family. Interacts with CALM1. In terms of tissue distribution, expressed in testis (at protein level).

It localises to the cell projection. The protein localises to the cilium. Its subcellular location is the flagellum. In terms of biological role, seems to play a role in sperm motility. This chain is Golgi-associated RAB2 interactor protein 2, found in Mus musculus (Mouse).